A 256-amino-acid polypeptide reads, in one-letter code: Acetylglutamate kinase (256 aa).

Substrate contacts are provided by residues G40–G41, R62, and N153.

This sequence belongs to the acetylglutamate kinase family. ArgB subfamily.

The protein resides in the cytoplasm. It catalyses the reaction N-acetyl-L-glutamate + ATP = N-acetyl-L-glutamyl 5-phosphate + ADP. It participates in amino-acid biosynthesis; L-arginine biosynthesis; N(2)-acetyl-L-ornithine from L-glutamate: step 2/4. Functionally, catalyzes the ATP-dependent phosphorylation of N-acetyl-L-glutamate. In Bacillus cytotoxicus (strain DSM 22905 / CIP 110041 / 391-98 / NVH 391-98), this protein is Acetylglutamate kinase.